A 798-amino-acid chain; its full sequence is ABC transporter G family member 4 (798 aa).

Residues 1–51 are disordered; that stretch reads MEDIGNNNFEIIDDKSDEKNDENFEDKNSRNNINEEQILSNQQQQQQQQQQ. Positions 12 to 29 are enriched in basic and acidic residues; the sequence is IDDKSDEKNDENFEDKNS. The segment covering 30-41 has biased composition (polar residues); sequence RNNINEEQILSN. Residues 34 to 83 adopt a coiled-coil conformation; that stretch reads NEEQILSNQQQQQQQQQQQQQQQQQQQQQQQQQQQQQQEQQQFKNEVINT. A compositionally biased stretch (low complexity) spans 42–51; that stretch reads QQQQQQQQQQ. Residues 211–464 enclose the ABC transporter domain; that stretch reads IDIEDIESQV…SIDSNYKCPP (254 aa). 253–260 lines the ATP pocket; that stretch reads GPSGSGKS. Helical transmembrane passes span 540-560, 579-599, 628-648, 656-676, 687-707, 713-733, and 771-791; these read VVFF…SACF, LFFF…STFV, IVSS…IVHL, ILSL…VIAM, FSYC…LVPI, SFGW…IVII, and SIGI…IGLY. Positions 540 to 793 constitute an ABC transmembrane type-2 domain; it reads VVFFSKIVIA…ILAYIGLYKF (254 aa).

It belongs to the ABC transporter superfamily. ABCG family. Eye pigment precursor importer (TC 3.A.1.204) subfamily.

The protein resides in the membrane. In Dictyostelium discoideum (Social amoeba), this protein is ABC transporter G family member 4 (abcG4).